The following is a 437-amino-acid chain: ATP-dependent protease ATPase subunit HslU (437 aa).

Residues Val18, 60–65 (GCGKTE), Asp250, Glu315, and Arg387 contribute to the ATP site.

The protein belongs to the ClpX chaperone family. HslU subfamily. As to quaternary structure, a double ring-shaped homohexamer of HslV is capped on each side by a ring-shaped HslU homohexamer. The assembly of the HslU/HslV complex is dependent on binding of ATP.

It is found in the cytoplasm. Its function is as follows. ATPase subunit of a proteasome-like degradation complex; this subunit has chaperone activity. The binding of ATP and its subsequent hydrolysis by HslU are essential for unfolding of protein substrates subsequently hydrolyzed by HslV. HslU recognizes the N-terminal part of its protein substrates and unfolds these before they are guided to HslV for hydrolysis. The chain is ATP-dependent protease ATPase subunit HslU from Methylorubrum populi (strain ATCC BAA-705 / NCIMB 13946 / BJ001) (Methylobacterium populi).